The chain runs to 281 residues: MNGSFTVKKVLNNNVLIASHHKYSEVVLIGKGIGFGKKQDDVIEDKGYDKMFILKDEKEQKQFKKLLDYVDEKLVDISNDVIYHISNRTNHSLNEHIHIALTDHIAFAIKRQQQGFDMKNPFLMETQSLYPEEYQIAKEVIDMINEKAGLCLPEGEIGFIALHIHSALTNRPLSEVNQHSQLMAQLVEVIEDSFQMKVNKESVNYLRLIRHIRFTIERIKKEEPTKEPEKLMLLLKNEYPLCYNTAWKLIKILQQTLKKPVHEAEAVYLTLHLYRLTNKIS.

The interval 1–60 is RNA binding; it reads MNGSFTVKKVLNNNVLIASHHKYSEVVLIGKGIGFGKKQDDVIEDKGYDKMFILKDEKEQ. PRD domains are found at residues 69–174 and 175–278; these read YVDE…RPLS and EVNQ…RLTN. A phosphohistidine; by EII-Glc mark is found at H104 and H163. H211 carries the post-translational modification Phosphohistidine; by HPr.

The protein belongs to the transcriptional antiterminator BglG family. GlcT subfamily. As to quaternary structure, homodimer. The monomeric form probably also exists but it would be inactive in RNA binding and antitermination. Post-translationally, phosphorylated by HPr (PtsH) and EII-Glc (PtsG). HPr phosphorylates the PRD 2 domain which has a slight stimulatory effect on GlcT activity, while EII-Glc phosphorylates the PRD 1 domain which inactivates GlcT. The phosphorylation is dependent on the presence or absence of glucose which acts as an inducer of the ptsGHI operon expression. In the presence of glucose the phosphoryl group is transferred from phosphorylated HPr to the sugar via EII-Glc. Under these conditions GlcT is not phosphorylated and binds to the RAT sequence, thus allowing transcription of the ptsGHI operon. In the absence of glucose, phosphorylated EII-Glc accumulates in the cell and phosphorylates the PRD 1 domain of GlcT, leading to its inactivation; this phosphorylation may prevent dimerization of GlcT.

Its function is as follows. Mediates the positive regulation of the glucose PTS operon (ptsGHI) by functioning as an antiterminator factor of transcription via its interaction with the RNA-antiterminator (RAT) sequence located upstream of the ptsG gene. The RNA-binding domain of GlcT directly binds to the RNA antiterminator (RAT) sequence and prevents transcriptional termination. GlcT binding requires two identical and nearly symmetrical triple base pairings in the RAT sequence. The sequence is that of PtsGHI operon antiterminator (glcT) from Bacillus subtilis (strain 168).